Here is a 364-residue protein sequence, read N- to C-terminus: Phospho-N-acetylmuramoyl-pentapeptide-transferase (364 aa).

10 helical membrane-spanning segments follow: residues 18–38, 48–68, 91–111, 114–134, 154–174, 183–203, 214–234, 237–257, 280–300, and 343–363; these read SLLILLILLLGLLCLGFAQIL, LFPLAVSAICSAILGYVVVPV, GTPTMGGIFFVPVAVIIALIW, LDPAVLAVSIVTLAYMGIGWI, LILQIAIAVGFCIWTFLTQSA, GQIILPLGLFFWIIAGFVLVA, VDGLAGGTGSLAFLGLAALMA, NPGLMIFCACMSGGCLGFIVH, AIGILSGHVWGLFLVSGIFFV, and TQIVGLFYLINAGLAVLAVIS.

It belongs to the glycosyltransferase 4 family. MraY subfamily. It depends on Mg(2+) as a cofactor.

The protein resides in the cell inner membrane. The enzyme catalyses UDP-N-acetyl-alpha-D-muramoyl-L-alanyl-gamma-D-glutamyl-meso-2,6-diaminopimeloyl-D-alanyl-D-alanine + di-trans,octa-cis-undecaprenyl phosphate = di-trans,octa-cis-undecaprenyl diphospho-N-acetyl-alpha-D-muramoyl-L-alanyl-D-glutamyl-meso-2,6-diaminopimeloyl-D-alanyl-D-alanine + UMP. Its pathway is cell wall biogenesis; peptidoglycan biosynthesis. Its function is as follows. Catalyzes the initial step of the lipid cycle reactions in the biosynthesis of the cell wall peptidoglycan: transfers peptidoglycan precursor phospho-MurNAc-pentapeptide from UDP-MurNAc-pentapeptide onto the lipid carrier undecaprenyl phosphate, yielding undecaprenyl-pyrophosphoryl-MurNAc-pentapeptide, known as lipid I. The polypeptide is Phospho-N-acetylmuramoyl-pentapeptide-transferase (Rippkaea orientalis (strain PCC 8801 / RF-1) (Cyanothece sp. (strain PCC 8801))).